The sequence spans 452 residues: Tryptophan biosynthesis protein TrpCF (452 aa).

Residues 1–256 (MQTVLAKIVA…AAVRRVLLGE (256 aa)) are indole-3-glycerol phosphate synthase. The tract at residues 257–452 (NKVCGLTRAQ…ASVFQTLRAY (196 aa)) is N-(5'-phosphoribosyl)anthranilate isomerase.

In the N-terminal section; belongs to the TrpC family. It in the C-terminal section; belongs to the TrpF family. As to quaternary structure, monomer.

The catalysed reaction is N-(5-phospho-beta-D-ribosyl)anthranilate = 1-(2-carboxyphenylamino)-1-deoxy-D-ribulose 5-phosphate. It catalyses the reaction 1-(2-carboxyphenylamino)-1-deoxy-D-ribulose 5-phosphate + H(+) = (1S,2R)-1-C-(indol-3-yl)glycerol 3-phosphate + CO2 + H2O. It participates in amino-acid biosynthesis; L-tryptophan biosynthesis; L-tryptophan from chorismate: step 3/5. It functions in the pathway amino-acid biosynthesis; L-tryptophan biosynthesis; L-tryptophan from chorismate: step 4/5. Functionally, bifunctional enzyme that catalyzes two sequential steps of tryptophan biosynthetic pathway. The first reaction is catalyzed by the isomerase, coded by the TrpF domain; the second reaction is catalyzed by the synthase, coded by the TrpC domain. This is Tryptophan biosynthesis protein TrpCF (trpC) from Salmonella typhimurium (strain LT2 / SGSC1412 / ATCC 700720).